Reading from the N-terminus, the 4454-residue chain is E3 ubiquitin-protein ligase HUWE1 (4454 aa).

Residues 521 to 575 (RASSSNSSTSISGPGPGPGPGPGPGPGPGPGPGPGPGLGPSLGPGPGPGPRPGVQ) form a disordered region. A compositionally biased stretch (low complexity) spans 523-533 (SSSNSSTSISG). The span at 535-571 (GPGPGPGPGPGPGPGPGPGPGPGLGPSLGPGPGPGPR) shows a compositional bias: pro residues. Phosphoserine is present on residues S724 and S725. Disordered stretches follow at residues 781 to 834 (QKAD…VVGT), 1054 to 1077 (DEKA…AGSM), and 1094 to 1114 (TLAP…KSKI). Residues 801–811 (ASSEDEEEEEV) are compositionally biased toward acidic residues. Positions 813–832 (AMQSFNSAQQNETEPNQQVV) are enriched in polar residues. S816 bears the Phosphoserine mark. S1160 carries the phosphoserine modification. The span at 1367-1378 (LSKEKEGSRGEE) shows a compositional bias: basic and acidic residues. The segment at 1367 to 1396 (LSKEKEGSRGEEEAGQEEGGSRREPQVNQQ) is disordered. A UBA domain is found at 1392-1431 (QVNQQQLQQLMDMGFTREHAMEALLNTSTMEQATEYLLTH). S1444, S1446, S1458, and S1471 each carry phosphoserine. Residues 1446-1465 (SEEDQMMRAIAMSLGQDIPM) enclose the UIM domain. Residues 1472-1491 (PEEVACRKEEEERKAREKQE) are disordered. Positions 1679–1756 (RAQMTKYLQS…ETGNRRPVML (78 aa)) constitute a WWE domain. A disordered region spans residues 1766-1802 (KNSKSSNGQELEKTLEESKETDIKRKENKGNDIPLAL). The span at 1775-1795 (ELEKTLEESKETDIKRKENKG) shows a compositional bias: basic and acidic residues. S1983 carries the phosphoserine modification. 3 disordered regions span residues 2095-2142 (APAE…SKPL), 2339-2420 (SLFG…QEMQ), and 2433-2556 (LERD…ASPL). A compositionally biased stretch (low complexity) spans 2097–2112 (AETSTTGTSQGEGAST). T2112 is subject to Phosphothreonine. The segment covering 2114-2134 (EETREGKKDKEGDRTSEEGKQ) has biased composition (basic and acidic residues). Residues 2339 to 2368 (SLFGSKSASSKSKSEQDAQGASQDSSSHQQ) are compositionally biased toward low complexity. Position 2343 is a phosphoserine (S2343). Position 2344 is an N6-acetyllysine (K2344). Composition is skewed to acidic residues over residues 2372 to 2383 (EPGEAEVQEEDH) and 2391 to 2402 (ADGDIMDGEAET). Phosphoserine occurs at positions 2439, 2442, and 2468. Polar residues predominate over residues 2465-2475 (SNLSQASTLQA). Acidic residues predominate over residues 2485-2549 (DPEDEEEHTQ…SEMELDEDYP (65 aa)). 3 positions are modified to phosphoserine: S2604, S2609, and S2612. Phosphothreonine is present on T2631. A phosphoserine mark is found at S2661, S2672, and S2696. The segment covering 2781–2793 (IIDKGKEDKENRD) has biased composition (basic and acidic residues). Disordered regions lie at residues 2781-3047 (IIDK…GVDP) and 3113-3136 (QQRA…MDPV). Over residues 2794 to 2813 (QSAQCTVSKTNDSTEQNVSD) the composition is skewed to polar residues. The span at 2815 to 2849 (TPMPDSYPTTPSSTDAPTSESKETLGTLQPSQQQP) shows a compositional bias: low complexity. T2828 is subject to Phosphothreonine. Composition is skewed to polar residues over residues 2895–2912 (AETT…TSLS), 2924–2941 (AVSS…SLAS), and 2954–2967 (AGSS…SSTP). Residues S2903, S2910, S2912, S2938, S2964, and S2965 each carry the phosphoserine modification. T2966 is subject to Phosphothreonine. Over residues 2990–3009 (PPEDSSPPASSESSSTRDSA) the composition is skewed to low complexity. S2995 carries the post-translational modification Phosphoserine. 5 positions are modified to phosphoserine: S3193, S3194, S3199, S3204, and S3212. R3226 carries the omega-N-methylarginine modification. Disordered stretches follow at residues 3320–3343 (PKLS…SHEN), 3431–3458 (QRTK…SQSS), 3482–3501 (GKNS…ETSL), 3548–3590 (SEVQ…TTPV), and 3615–3642 (TPTT…EGGS). The span at 3432–3446 (RTKETNCESDRERGS) shows a compositional bias: basic and acidic residues. A compositionally biased stretch (low complexity) spans 3447–3458 (KQACSPCSSQSS). Composition is skewed to low complexity over residues 3552 to 3579 (TNSS…ATAP) and 3615 to 3628 (TPTT…TSTT). S3633, S3740, S3830, S3835, S3837, and S3838 each carry phosphoserine. Residues 3815–3836 (TRRANKKAKQTGRLGSSGLGSA) are disordered. Residues 3826–3836 (GRLGSSGLGSA) are compositionally biased toward low complexity. Disordered stretches follow at residues 3859 to 3927 (EGQR…LPLL) and 3974 to 4028 (RESK…SSSL). The segment covering 3871-3880 (TSESSNQSET) has biased composition (polar residues). A phosphoserine mark is found at S3887, S3895, and S3907. The segment covering 3894–3905 (PSPSAQDTQSIV) has biased composition (polar residues). At T3910 the chain carries Phosphothreonine. 2 stretches are compositionally biased toward basic and acidic residues: residues 3913–3922 (GEKEKEERPP) and 3974–3995 (RESK…KDEP). Phosphoserine occurs at positions 3986 and 3999. Residues 3996–4005 (PPLSPAPLTP) are compositionally biased toward pro residues. T4004 and T4007 each carry phosphothreonine. The span at 4018 to 4028 (EPSSMHISSSL) shows a compositional bias: polar residues. An HECT domain is found at 4118–4454 (SPEEMKNRLY…QECSEGFGLA (337 aa)). Phosphotyrosine is present on Y4351. C4421 (glycyl thioester intermediate) is an active-site residue.

Belongs to the UPL family. TOM1/PTR1 subfamily. Interacts with isoform p14ARF of CDKN2A which strongly inhibits HUWE1 ubiquitin ligase activity. Interacts with MYCN, POLB and CDC6. Interacts with isoform 2 of PA2G4. Interacts with NR1D1. Interacts with AMBRA1. Interacts with HAPSTR1. Interacts with HAPSTR2. In hepatocytes, interacts with PAQR3; the interaction promotes PPARA poylubiquitination and STUB1-mediated degradation. In terms of processing, phosphorylated on tyrosine, phosphorylation is probably required for its ability to inhibit TP53 transactivation. As to expression, widely expressed.

It is found in the cytoplasm. The protein resides in the nucleus. The protein localises to the mitochondrion. The enzyme catalyses S-ubiquitinyl-[E2 ubiquitin-conjugating enzyme]-L-cysteine + [acceptor protein]-L-lysine = [E2 ubiquitin-conjugating enzyme]-L-cysteine + N(6)-ubiquitinyl-[acceptor protein]-L-lysine.. It participates in protein modification; protein ubiquitination. Its function is as follows. E3 ubiquitin-protein ligase which mediates ubiquitination and subsequent proteasomal degradation of target proteins. Regulates apoptosis by catalyzing the polyubiquitination and degradation of MCL1. Mediates monoubiquitination of DNA polymerase beta (POLB) at 'Lys-41', 'Lys-61' and 'Lys-81', thereby playing a role in base-excision repair. Also ubiquitinates the p53/TP53 tumor suppressor and core histones including H1, H2A, H2B, H3 and H4. Ubiquitinates MFN2 to negatively regulate mitochondrial fusion in response to decreased stearoylation of TFRC. Ubiquitination of MFN2 also takes place following induction of mitophagy; AMBRA1 acts as a cofactor for HUWE1-mediated ubiquitination. Regulates neural differentiation and proliferation by catalyzing the polyubiquitination and degradation of MYCN. May regulate abundance of CDC6 after DNA damage by polyubiquitinating and targeting CDC6 to degradation. Mediates polyubiquitination of PA2G4. Acts in concert with MYCBP2 to regulate the circadian clock gene expression by promoting the lithium-induced ubiquination and degradation of NR1D1. Binds to an upstream initiator-like sequence in the preprodynorphin gene. Mediates HAPSTR1 degradation, but is also a required cofactor in the pathway by which HAPSTR1 governs stress signaling. Acts as a regulator of the JNK and NF-kappa-B signaling pathways by mediating assembly of heterotypic 'Lys-63'-/'Lys-48'-linked branched ubiquitin chains that are then recognized by TAB2: HUWE1 mediates branching of 'Lys-48'-linked chains of substrates initially modified with 'Lys-63'-linked conjugates by TRAF6. 'Lys-63'-/'Lys-48'-linked branched ubiquitin chains protect 'Lys-63'-linkages from CYLD deubiquitination. Ubiquitinates PPARA in hepatocytes. The polypeptide is E3 ubiquitin-protein ligase HUWE1 (Huwe1) (Rattus norvegicus (Rat)).